Consider the following 484-residue polypeptide: Sperm motility kinase 2B (484 aa).

The region spanning 8–256 (YVMLETIGHG…VAEVMVHPWV (249 aa)) is the Protein kinase domain. ATP contacts are provided by residues 14–22 (IGHGGCSKV) and K37. D127 (proton acceptor) is an active-site residue. One can recognise a UBA domain in the interval 272 to 314 (PLKPNPAIVKAMGYIGFQAQDIEDSLRQRKFNETMASYCLLKK). Composition is skewed to polar residues over residues 356–373 (PTSL…CGRS) and 422–434 (SSDD…TSAS). 2 disordered regions span residues 356–400 (PTSL…TMDH) and 422–450 (SSDD…RGIK).

It belongs to the protein kinase superfamily. CAMK Ser/Thr protein kinase family. Smok subfamily. Testis-specific. Expressed in the testis from 22 days postpartum (22 dpp).

The catalysed reaction is L-seryl-[protein] + ATP = O-phospho-L-seryl-[protein] + ADP + H(+). It carries out the reaction L-threonyl-[protein] + ATP = O-phospho-L-threonyl-[protein] + ADP + H(+). May play a role in sperm motility, especially in the regulation of flagellar function. This is Sperm motility kinase 2B from Mus musculus (Mouse).